Reading from the N-terminus, the 43-residue chain is Metallothionein-2 (43 aa).

Position 1 is a blocked amino end (Met) (Met1).

The protein belongs to the metallothionein superfamily. Type 5 family.

In terms of biological role, this protein binds cations of several transition elements. Thought to be involved in metal ion homeostasis. The polypeptide is Metallothionein-2 (MtnB) (Drosophila melanogaster (Fruit fly)).